The sequence spans 398 residues: Probable purine permease 17 (398 aa).

Residues 1–26 form a disordered region; the sequence is MEMSKASKQTTRHEESEHVQNPEPDQ. The span at 11–20 shows a compositional bias: basic and acidic residues; that stretch reads TRHEESEHVQ. Ser-29 carries the post-translational modification Phosphoserine. The next 10 membrane-spanning stretches (helical) occupy residues 43 to 63, 88 to 108, 127 to 147, 155 to 175, 183 to 203, 219 to 239, 258 to 278, 301 to 321, 332 to 352, and 355 to 375; these read ISVS…MLLL, WTQA…FFIF, LFFL…LFAL, GIFS…TAII, WIII…PDFG, WLAF…QLGF, VLEM…VGLF, VLSL…MIGL, VVHM…FDFM, and VFSW…GSYF.

It belongs to the purine permeases (TC 2.A.7.14) family.

The protein localises to the membrane. The polypeptide is Probable purine permease 17 (PUP17) (Arabidopsis thaliana (Mouse-ear cress)).